The following is a 318-amino-acid chain: N-succinylornithine carbamoyltransferase (318 aa).

Carbamoyl phosphate contacts are provided by residues 47 to 50 (SLRT), Trp-75, and Arg-110. N(2)-succinyl-L-ornithine is bound at residue Glu-142. Residue 147 to 150 (HPLQ) coordinates carbamoyl phosphate. 2 residues coordinate N(2)-succinyl-L-ornithine: His-176 and Lys-236. 274-275 (CL) contacts carbamoyl phosphate. Arg-278 serves as a coordination point for N(2)-succinyl-L-ornithine. Arg-302 contributes to the carbamoyl phosphate binding site.

This sequence belongs to the aspartate/ornithine carbamoyltransferase superfamily. SOTCase family. Homotrimer.

It catalyses the reaction N(2)-succinyl-L-ornithine + carbamoyl phosphate = N(2)-succinyl-L-citrulline + phosphate + H(+). The protein operates within amino-acid biosynthesis; L-arginine biosynthesis. Its function is as follows. Catalyzes the transfer of the carbamoyl group from carbamoyl phosphate to the delta-amino group of N(2)-succinyl-L-ornithine to produce N(2)-succinyl-L-citrulline. Is essential for arginine biosynthesis. Has no activity with either L-ornithine or L-aspartate as substrate. Also has no detectable AOTCase activity, being unable to convert N(2)-acetyl-L-ornithine to N(2)-acetyl-L-citrulline. This is N-succinylornithine carbamoyltransferase from Bacteroides fragilis (strain 638R).